Reading from the N-terminus, the 189-residue chain is MQIWAGLGNPGPKYALHRHNVGFMACDVIAEMHGFEPVQKKFQGWVQEGRIGSEKVLLLKPGTFMNESGRAIGEAMRFYKLEPQDVTVFYDELDLEPFKIKVKRGGGAAGHNGIRSTIRHIGEDFRRIRIGIGHPGHKDRVTGHVLGNYAKAEQDDLVQMLGAIGAEAEWLAKGDDARFMSDIALRLQA.

Tyr14 contributes to the tRNA binding site. The active-site Proton acceptor is His19. Residues Phe64, Asn66, and Asn112 each coordinate tRNA.

This sequence belongs to the PTH family. In terms of assembly, monomer.

It localises to the cytoplasm. The catalysed reaction is an N-acyl-L-alpha-aminoacyl-tRNA + H2O = an N-acyl-L-amino acid + a tRNA + H(+). Hydrolyzes ribosome-free peptidyl-tRNAs (with 1 or more amino acids incorporated), which drop off the ribosome during protein synthesis, or as a result of ribosome stalling. Its function is as follows. Catalyzes the release of premature peptidyl moieties from peptidyl-tRNA molecules trapped in stalled 50S ribosomal subunits, and thus maintains levels of free tRNAs and 50S ribosomes. This is Peptidyl-tRNA hydrolase from Erythrobacter litoralis (strain HTCC2594).